The following is a 120-amino-acid chain: Small ribosomal subunit protein uS10 (120 aa).

2 positions are modified to phosphoserine: Ser-16 and Ser-18.

Belongs to the universal ribosomal protein uS10 family. In terms of tissue distribution, expressed ubiquitously in embryos, highest expression is in the midgut.

The polypeptide is Small ribosomal subunit protein uS10 (RpS20) (Drosophila melanogaster (Fruit fly)).